The chain runs to 467 residues: Argininosuccinate lyase (467 aa).

Belongs to the lyase 1 family. Argininosuccinate lyase subfamily.

The protein resides in the cytoplasm. It catalyses the reaction 2-(N(omega)-L-arginino)succinate = fumarate + L-arginine. It functions in the pathway amino-acid biosynthesis; L-arginine biosynthesis; L-arginine from L-ornithine and carbamoyl phosphate: step 3/3. The chain is Argininosuccinate lyase from Chromohalobacter salexigens (strain ATCC BAA-138 / DSM 3043 / CIP 106854 / NCIMB 13768 / 1H11).